The chain runs to 469 residues: NADH-quinone oxidoreductase subunit N (469 aa).

14 consecutive transmembrane segments (helical) span residues 9–29 (PLLM…LIAG), 40–60 (VGVM…VQMV), 76–96 (ATGV…AVAG), 105–125 (EAET…LAGA), 128–148 (LLLL…LVGL), 162–182 (YLMG…LYGL), 201–221 (VAVA…AGGV), 234–254 (ANAT…LVAL), 265–285 (LAWP…GNLA), 294–316 (RLLG…VAGA), 327–347 (YLGG…ALPG), 365–385 (AAAL…AVFI), 402–422 (LAVV…RWII), and 448–468 (VLAA…WQLV).

Belongs to the complex I subunit 2 family. NDH-1 is composed of 14 different subunits. Subunits NuoA, H, J, K, L, M, N constitute the membrane sector of the complex.

It is found in the cell membrane. It carries out the reaction a quinone + NADH + 5 H(+)(in) = a quinol + NAD(+) + 4 H(+)(out). NDH-1 shuttles electrons from NADH, via FMN and iron-sulfur (Fe-S) centers, to quinones in the respiratory chain. The immediate electron acceptor for the enzyme in this species is believed to be a menaquinone. Couples the redox reaction to proton translocation (for every two electrons transferred, four hydrogen ions are translocated across the cytoplasmic membrane), and thus conserves the redox energy in a proton gradient. The protein is NADH-quinone oxidoreductase subunit N of Mycobacterium sp. (strain JLS).